The chain runs to 869 residues: Rho GTPase-activating protein 27 (869 aa).

The 64-residue stretch at 6–69 (EGDVYVLVEH…PAQYVRELPA (64 aa)) folds into the SH3 domain. The segment at 104-137 (GADGSSAEPRGRASSLCGPARQRTSGQRNSLAPG) is disordered. A phosphoserine mark is found at Ser-155, Ser-215, and Ser-249. 2 consecutive WW domains span residues 246–280 (PRLS…SPFE) and 299–333 (ESLE…DETE). Disordered regions lie at residues 275–299 (WESP…GSGE), 331–389 (ETEE…DLGP), and 447–474 (VPVP…PEEK). A compositionally biased stretch (acidic residues) spans 331-343 (ETEELEDDPEEQL). A compositionally biased stretch (polar residues) spans 345 to 356 (MQPSLSPRSPGQ). Phosphoserine is present on Ser-350. In terms of domain architecture, WW 3 spans 414–447 (QFTQEQWVRLEDQEGKPYFYNPEDSSVQWELPQV). Residues Ser-459 and Ser-462 each carry the phosphoserine modification. Thr-464 is modified (phosphothreonine). Ser-469 bears the Phosphoserine mark. Positions 477-593 (TLDKAGVLHR…WHKAIAEGIE (117 aa)) constitute a PH domain. The interval 598-644 (DLPQREEGEPSSADFGSSERLGSWKEEDVRPNAASPSLNPGSQESDL) is disordered. Over residues 631 to 642 (ASPSLNPGSQES) the composition is skewed to polar residues. Phosphoserine is present on Ser-632. A Rho-GAP domain is found at 677–866 (CALAQLCERE…LILHQCADIF (190 aa)).

As to quaternary structure, interacts with SH3KBP1/CIN85.

Its subcellular location is the cytoplasm. It localises to the membrane. Its function is as follows. Rho GTPase-activating protein which may be involved in clathrin-mediated endocytosis. GTPase activators for the Rho-type GTPases act by converting them to an inactive GDP-bound state. Has activity toward CDC42 and RAC1. This chain is Rho GTPase-activating protein 27 (Arhgap27), found in Rattus norvegicus (Rat).